We begin with the raw amino-acid sequence, 307 residues long: Ribosomal RNA small subunit methyltransferase H (307 aa).

S-adenosyl-L-methionine is bound by residues 32–34 (AGH), aspartate 51, isoleucine 82, aspartate 99, and glutamine 106.

The protein belongs to the methyltransferase superfamily. RsmH family.

The protein localises to the cytoplasm. The catalysed reaction is cytidine(1402) in 16S rRNA + S-adenosyl-L-methionine = N(4)-methylcytidine(1402) in 16S rRNA + S-adenosyl-L-homocysteine + H(+). In terms of biological role, specifically methylates the N4 position of cytidine in position 1402 (C1402) of 16S rRNA. The chain is Ribosomal RNA small subunit methyltransferase H from Campylobacter concisus (strain 13826).